A 441-amino-acid polypeptide reads, in one-letter code: Baicalein 7-O-glucuronosyltransferase (441 aa).

This sequence belongs to the UDP-glycosyltransferase family. Homodimer.

It catalyses the reaction baicalein + UDP-alpha-D-glucuronate = baicalin + UDP. Its activity is regulated as follows. Inhibited by copper, zinc and iron, p-Chloromercuri-benzoic acid (PCMBA) and 4,4'-diisothiocyanostilbene-2,2'-disulfonic acid (DIDS), but not by N-ethylmaleimide (NEM), dithioerythritol (DTE), calcium or magnesium. Its function is as follows. Involved in the production of glucuronosylated baicalein, a flavonoid that shows antiallergic, anti-HIV and antitumor activities. Can use baicalein, scutellarein and wogonin as substrates, but not chrysin, apigenin, luteolin, quercetin, formononetin and daidzein. Highly specific for UDP-glucuronate (UDP-GlcUA) and no activity with UDP-glucose or UDP-galacturonic acid. The polypeptide is Baicalein 7-O-glucuronosyltransferase (UBGAT-I) (Scutellaria baicalensis (Baical skullcap)).